The primary structure comprises 412 residues: Probable histone-binding protein rba-1 (412 aa).

6 WD repeats span residues 117 to 157 (NHPG…SEPK), 169 to 209 (GHEG…TISG), 219 to 259 (GHSS…PQLT), 262 to 302 (GHTA…KKMY), 306 to 346 (HHND…DPSS), and 365 to 405 (GHTG…VSSE).

This sequence belongs to the WD repeat RBAP46/RBAP48/MSI1 family. Binds directly to helix 1 of the histone fold of histone H4, a region that is not accessible when H4 is in chromatin. Interacts with zft-11; the interaction is required to suppress the activation of non-neuronal genes in neurons.

It localises to the nucleus. In terms of biological role, core histone-binding subunit that may target chromatin assembly factors, chromatin remodeling factors and histone deacetylases to their histone substrates in a manner that is regulated by nucleosomal DNA. Plays a role in regulating cell cycle progression. Required to repress the induction of vulval development by Ras signaling. In association with the zinc finger protein ztf-11, negatively regulates the expression of non-neuronal genes during neurogenesis. The polypeptide is Probable histone-binding protein rba-1 (Caenorhabditis elegans).